The sequence spans 404 residues: MQYSEIMVRHGELSTKGKNRMRFINKLKRNIQEVLSPFPNIKVRSDRDRTHVFLNGTPYEPVAEALKNVFGIQAFNPVYKLEKNVDLLIASVQEIMKDLYVDGMTFKISSKRSDHHFELDSRDLNLVLGNAVFDVLPNIKAQMKKPDVNLKVEIRDEAAYISHEEIKGAGGLPVGTSGKGMLMLSGGIDSPVAGYLALKRGVEIEAVHFASPPYTSPGALKKAQDLTRKLTKFGGNIQFIEVPFTEIQEEIKDKAPEAYLMTLTRRFMMRITDAIRASRSGLVIVNGESLGQVASQTLESMQAINAVTATPVIRPVVTMDKLEIIELAEKIDTFSISIQPFEDCCTIFAPDRPKTNPKLKNVEEYEKRFDIDGLVQRAVKGIKITEIKPEAEADDVDLMLDALL.

A THUMP domain is found at 60–165; it reads EPVAEALKNV…DEAAYISHEE (106 aa). ATP is bound by residues 183 to 184, 208 to 209, arginine 265, glycine 287, and glutamine 296; these read ML and HF.

Belongs to the ThiI family.

It is found in the cytoplasm. The enzyme catalyses [ThiI sulfur-carrier protein]-S-sulfanyl-L-cysteine + a uridine in tRNA + 2 reduced [2Fe-2S]-[ferredoxin] + ATP + H(+) = [ThiI sulfur-carrier protein]-L-cysteine + a 4-thiouridine in tRNA + 2 oxidized [2Fe-2S]-[ferredoxin] + AMP + diphosphate. It carries out the reaction [ThiS sulfur-carrier protein]-C-terminal Gly-Gly-AMP + S-sulfanyl-L-cysteinyl-[cysteine desulfurase] + AH2 = [ThiS sulfur-carrier protein]-C-terminal-Gly-aminoethanethioate + L-cysteinyl-[cysteine desulfurase] + A + AMP + 2 H(+). The protein operates within cofactor biosynthesis; thiamine diphosphate biosynthesis. Functionally, catalyzes the ATP-dependent transfer of a sulfur to tRNA to produce 4-thiouridine in position 8 of tRNAs, which functions as a near-UV photosensor. Also catalyzes the transfer of sulfur to the sulfur carrier protein ThiS, forming ThiS-thiocarboxylate. This is a step in the synthesis of thiazole, in the thiamine biosynthesis pathway. The sulfur is donated as persulfide by IscS. This is Probable tRNA sulfurtransferase from Streptococcus uberis (strain ATCC BAA-854 / 0140J).